The sequence spans 317 residues: Putative GTPase PH0274 (317 aa).

GTP is bound by residues 54-62, Asp196, and 231-233; these read GPPGAGKST and VGT.

Belongs to the SIMIBI class G3E GTPase family. ArgK/MeaB subfamily.

In terms of biological role, may have GTPase activity. May also bind and hydrolyze ATP. May function as chaperone. The chain is Putative GTPase PH0274 from Pyrococcus horikoshii (strain ATCC 700860 / DSM 12428 / JCM 9974 / NBRC 100139 / OT-3).